We begin with the raw amino-acid sequence, 386 residues long: Trichocyst matrix protein T2-A (386 aa).

An N-terminal signal peptide occupies residues 1–19; that stretch reads MKTVILALALIVLASSTQA. Residues 20-48 constitute a propeptide that is removed on maturation; that stretch reads DVIATIKKIDQSPFGRTLFDTIYLELQTG. The stretch at 51–154 forms a coiled coil; it reads LDRLLSTLTD…AEEHEDFEEK (104 aa). Residues 184 to 238 constitute a propeptide that is removed on maturation; sequence KGKATKQTHKFTKEVASMIQKHFTTSAKKTAKFQHRKGYSKLFKAFATIASKVEQ. Residues 293–332 adopt a coiled-coil conformation; it reads SALANATSDLASLNDIIAQVEASLDTTEQRIENVSADRHD.

It belongs to the TMP family.

The protein localises to the trichocyst. Functionally, structural protein that crystallize inside the trichocyst matrix. The sequence is that of Trichocyst matrix protein T2-A (T2A) from Paramecium tetraurelia.